A 642-amino-acid polypeptide reads, in one-letter code: Threonine--tRNA ligase (642 aa).

In terms of domain architecture, TGS spans 1-61 (MPVIRFYDGS…REDAFIEFVD (61 aa)). The tract at residues 243–534 (DHRKIGKFLQ…LIEECSGNLP (292 aa)) is catalytic. Positions 334, 385, and 511 each coordinate Zn(2+).

This sequence belongs to the class-II aminoacyl-tRNA synthetase family. Homodimer. Zn(2+) serves as cofactor.

The protein resides in the cytoplasm. The enzyme catalyses tRNA(Thr) + L-threonine + ATP = L-threonyl-tRNA(Thr) + AMP + diphosphate + H(+). Its function is as follows. Catalyzes the attachment of threonine to tRNA(Thr) in a two-step reaction: L-threonine is first activated by ATP to form Thr-AMP and then transferred to the acceptor end of tRNA(Thr). Also edits incorrectly charged L-seryl-tRNA(Thr). The sequence is that of Threonine--tRNA ligase from Buchnera aphidicola subsp. Acyrthosiphon pisum (strain 5A).